A 1036-amino-acid polypeptide reads, in one-letter code: ADAMTS-like protein 4 (1036 aa).

Positions 1-24 are cleaved as a signal peptide; that stretch reads MESWLGRLWLCMMLLLPLPQPCQD. Positions 47–91 constitute a TSP type-1 1 domain; sequence GPWGRWASCSQPCGVGVQRRSRTCELHPALPLPPRPPRHPEAHRP. 2 disordered regions span residues 73 to 149 and 163 to 308; these read HPAL…IKPG and HRSR…WLPL. Positions 163-173 are enriched in basic residues; it reads HRSRRHPHRPG. The segment covering 215 to 253 has biased composition (polar residues); the sequence is TPRSGTAQTEVLPRTSSAPSYTGTPAPTSSFGDSRSFQG. N-linked (GlcNAc...) asparagine glycans are attached at residues asparagine 454 and asparagine 737. 5 TSP type-1 domains span residues 687–748, 750–804, 805–871, 872–931, and 932–988; these read CPPY…HLCG, WEIS…DMGP, CTTA…GPCE, RTWR…QGQA, and CEDK…QPCN. The PLAC domain maps to 991-1028; the sequence is PDDQCKDSSPHCPLVVQARLCVYPYYTTTCCRSCAHVL.

Interacts with CTSB. Interacts with FBN1. Glycosylated. Can be O-fucosylated by POFUT2 on a serine or a threonine residue found within the consensus sequence C1-X(2)-(S/T)-C2-G of the TSP type-1 repeat domains where C1 and C2 are the first and second cysteine residue of the repeat, respectively. Fucosylated repeats can then be further glycosylated by the addition of a beta-1,3-glucose residue by the glucosyltransferase, B3GALTL. Fucosylation mediates the efficient secretion of ADAMTS family members. Can also be C-glycosylated with one or two mannose molecules on tryptophan residues within the consensus sequence W-X-X-W of the TPRs, and N-glycosylated. These other glycosylations can also facilitate secretion. Widely expressed in a range of tissues. Especially prevalent in brain, spinal cord, muscle, lung and heart.

The protein resides in the secreted. The protein localises to the extracellular space. It is found in the extracellular matrix. In terms of biological role, positive regulation of apoptosis. May facilitate FBN1 microfibril biogenesis. The chain is ADAMTS-like protein 4 from Mus musculus (Mouse).